Here is a 392-residue protein sequence, read N- to C-terminus: Pyruvate synthase subunit PorA (392 aa).

Heterotetramer of one alpha, one beta, one delta and one gamma chain.

It carries out the reaction 2 oxidized [2Fe-2S]-[ferredoxin] + pyruvate + CoA = 2 reduced [2Fe-2S]-[ferredoxin] + acetyl-CoA + CO2 + H(+). This Thermotoga maritima (strain ATCC 43589 / DSM 3109 / JCM 10099 / NBRC 100826 / MSB8) protein is Pyruvate synthase subunit PorA (porA).